Here is a 513-residue protein sequence, read N- to C-terminus: NAD(P)H-quinone oxidoreductase subunit 2 (513 aa).

Helical transmembrane passes span 15–35 (VIWPEGILIITLMVILIGDLI), 43–63 (WLPYVAIAGLLAAVVALYFTW), 80–100 (LSIVFRAIIALSTASTVLMSI), 110–130 (LAEFLAIMLTATLGGMFLSGA), 133–153 (LVMIFISLEMLSISSYLMTGY), 168–188 (LLIGASSSAIFLYGVSLLYGL), 211–231 (LALAIALVFVIAGIAFKISAV), 245–265 (PTPVVAFLSVGSKAAGFALAI), 281–301 (FIFIALAILSMILGNVVALAQ), 307–327 (MLAYSSIGQAGFVMIGLTAGT), 335–355 (IFYLLIYLFMNLGAFACVILF), 379–399 (LCLSICLLSLGGIPPLAGFFG), 401–421 (IYLFWAGWQAGLYALVLVGLV), and 467–487 (VGIVLSLVATSLAGILSNPLF).

This sequence belongs to the complex I subunit 2 family. In terms of assembly, NDH-1 can be composed of about 15 different subunits; different subcomplexes with different compositions have been identified which probably have different functions.

It is found in the cellular thylakoid membrane. It catalyses the reaction a plastoquinone + NADH + (n+1) H(+)(in) = a plastoquinol + NAD(+) + n H(+)(out). The enzyme catalyses a plastoquinone + NADPH + (n+1) H(+)(in) = a plastoquinol + NADP(+) + n H(+)(out). Functionally, NDH-1 shuttles electrons from an unknown electron donor, via FMN and iron-sulfur (Fe-S) centers, to quinones in the respiratory and/or the photosynthetic chain. The immediate electron acceptor for the enzyme in this species is believed to be plastoquinone. Couples the redox reaction to proton translocation, and thus conserves the redox energy in a proton gradient. Cyanobacterial NDH-1 also plays a role in inorganic carbon-concentration. The polypeptide is NAD(P)H-quinone oxidoreductase subunit 2 (Microcystis aeruginosa (strain NIES-843 / IAM M-2473)).